Here is a 191-residue protein sequence, read N- to C-terminus: Potassium-transporting ATPase KdpC subunit (191 aa).

A helical membrane pass occupies residues 7–27 (ASLVLFLSLTLLTGVAYPLLV).

It belongs to the KdpC family. In terms of assembly, the system is composed of three essential subunits: KdpA, KdpB and KdpC.

The protein resides in the cell inner membrane. Functionally, part of the high-affinity ATP-driven potassium transport (or Kdp) system, which catalyzes the hydrolysis of ATP coupled with the electrogenic transport of potassium into the cytoplasm. This subunit acts as a catalytic chaperone that increases the ATP-binding affinity of the ATP-hydrolyzing subunit KdpB by the formation of a transient KdpB/KdpC/ATP ternary complex. This chain is Potassium-transporting ATPase KdpC subunit, found in Methylibium petroleiphilum (strain ATCC BAA-1232 / LMG 22953 / PM1).